The sequence spans 231 residues: ATP phosphoribosyltransferase (231 aa).

This sequence belongs to the ATP phosphoribosyltransferase family. Short subfamily. In terms of assembly, heteromultimer composed of HisG and HisZ subunits.

Its subcellular location is the cytoplasm. The enzyme catalyses 1-(5-phospho-beta-D-ribosyl)-ATP + diphosphate = 5-phospho-alpha-D-ribose 1-diphosphate + ATP. The protein operates within amino-acid biosynthesis; L-histidine biosynthesis; L-histidine from 5-phospho-alpha-D-ribose 1-diphosphate: step 1/9. Functionally, catalyzes the condensation of ATP and 5-phosphoribose 1-diphosphate to form N'-(5'-phosphoribosyl)-ATP (PR-ATP). Has a crucial role in the pathway because the rate of histidine biosynthesis seems to be controlled primarily by regulation of HisG enzymatic activity. The protein is ATP phosphoribosyltransferase of Brucella suis biovar 1 (strain 1330).